The primary structure comprises 77 residues: MKLIIFTGLALFAIVSLIEAEEESGRGCILLYGECTKATGSCCSNLICDCYRKLKKGVQIARQCFCSEKDVIYKKDI.

Residues 1-20 form the signal peptide; sequence MKLIIFTGLALFAIVSLIEA. A propeptide spanning residues 21–26 is cleaved from the precursor; sequence EEESGR.

This sequence belongs to the neurotoxin 19 (CSTX) family. 10 (U11-Lctx) subfamily. Contains 4 disulfide bonds. In terms of tissue distribution, expressed by the venom gland.

It localises to the secreted. The polypeptide is U11-lycotoxin-Ls1b (Lycosa singoriensis (Wolf spider)).